Reading from the N-terminus, the 76-residue chain is Omega-conotoxin-like TxMKLT1-0141 (76 aa).

Positions 1 to 22 (MKLTCMMIVAVLFLTAWTFATA) are cleaved as a signal peptide. Residues 23–50 (DDSSNGLENLFPKAHHEMKNPEASKLNE) constitute a propeptide that is removed on maturation. Cystine bridges form between Cys52/Cys67, Cys59/Cys70, and Cys66/Cys75.

The protein belongs to the conotoxin O1 superfamily. As to expression, expressed by the venom duct.

Its subcellular location is the secreted. Its function is as follows. Omega-conotoxins act at presynaptic membranes, they bind and block voltage-gated calcium channels (Cav). The protein is Omega-conotoxin-like TxMKLT1-0141 of Conus textile (Cloth-of-gold cone).